A 331-amino-acid polypeptide reads, in one-letter code: Centriolar satellite-associated tubulin polyglutamylase complex regulator 1 (331 aa).

Residues 1–111 (MLSPERLALP…HCLLQLLCPD (111 aa)) form a required for interaction with PCM1 region. Residues 1-225 (MLSPERLALP…SCPPPALVKE (225 aa)) form a required for interaction with TPGS1, LRRC49, and TTLL1 region. The segment at 112 to 331 (FPLELTQKAA…STEETDESET (220 aa)) is required for interaction with TPGS2. A disordered region spans residues 292 to 331 (SCLPSRTPPRVGSPWKPLHRSRKLDAESDGSTEETDESET). Residues 318 to 331 (ESDGSTEETDESET) show a composition bias toward acidic residues. The residue at position 319 (Ser319) is a Phosphoserine.

Belongs to the CSTPP1 family. As to quaternary structure, interacts with PCM1. Interacts with TTLL1, TPGS1, TPGS2 and LRRC49; the interactions link CSTPP1 to the complex TPGC. Binds to alpha-tubulin.

It localises to the cytoplasm. Its subcellular location is the cytoskeleton. The protein resides in the microtubule organizing center. It is found in the centrosome. The protein localises to the centriolar satellite. In terms of biological role, regulator of the tubulin polyglutamylase complex (TPGC) that controls cytoskeletal organization, nuclear shape, and cilium disassembly by balancing microtubule and actin assembly. Regulates the assembly and stability of the TPGC and thereby modulates polyglutamylation of the microtubule, which antagonizes MAP4 binding. The polypeptide is Centriolar satellite-associated tubulin polyglutamylase complex regulator 1 (Mus musculus (Mouse)).